The sequence spans 478 residues: uncharacterized protein (478 aa).

Positions 5-85 constitute an RRM domain; sequence KRIYVGGLSS…SKLRIEEARP (81 aa). Phosphoserine is present on residues serine 207 and serine 308.

The protein localises to the nucleus. The protein resides in the nucleolus. This is an uncharacterized protein from Schizosaccharomyces pombe (strain 972 / ATCC 24843) (Fission yeast).